The sequence spans 3242 residues: tRNA nuclease CdiA (3242 aa).

Positions 1-32 are cleaved as a signal peptide; that stretch reads MHQPPVRFTYRLLSYLISTIIAGQPLLPAVGA. The two-partner system transport domain (TPS) stretch occupies residues 36 to 322; that stretch reads PQNGAGMDKA…AGGNLSVTGT (287 aa). An FHA-1 region spans residues 351 to 1376; the sequence is GELTAGQNAM…IVVRTGHLLN (1026 aa). The receptor-binding domain (RBD) stretch occupies residues 1377–1668; it reads QREGFSATTT…TGQTGISDDW (292 aa). The tract at residues 1668-1852 is YP domain; that stretch reads WPLPSGNNGY…LSPEDITLHN (185 aa). The interval 1853–1913 is periplasmic FHA-1 repeat (pFR); sequence GSVISGNNVQ…DLSAIGDISN (61 aa). Residues 2021–2631 are FHA-2; the sequence is DNSASSTTSQ…TSKYDSKQTS (611 aa). Over residues 2075–2091 the composition is skewed to basic and acidic residues; sequence RESKNSRNGRSESHESH. 3 disordered regions span residues 2075-2094, 2310-2333, and 2439-2481; these read RESK…HAAV, GSSK…STIG, and TMAS…NAGN. The span at 2322 to 2333 shows a compositional bias: polar residues; sequence GTTQSQSASTIG. The DUF638-CT domain; not toxic when added to the outside of E.coli, does not interfere with F-pilus mediated conjugation, toxic when expressed intracellularly stretch occupies residues 2969 to 3242; that stretch reads GVDPSKLTED…IESALKGYGI (274 aa). Positions 2972–3015 are pre-toxin (PT) domain; it reads PSKLTEDQKQTVSTLATLSAGMAGGIASGDVAGAAAGAGAGKNV. The VENN CT cleavage motif motif lies at 3016 to 3019; sequence VENN. Positions 3016 to 3097 are toxin import domain; sufficient to import the tRNA nuclease domain of colicin E5 into E.coli, may bind F-pili; that stretch reads VENNALSLVA…KYLSSLHDKY (82 aa). A CT domain; toxic when added to the outside of E.coli and when expressed intracellularly region spans residues 3016–3242; it reads VENNALSLVA…IESALKGYGI (227 aa). The inner membrane translocation domain (IMTD), targets protein to FtsH stretch occupies residues 3020–3141; the sequence is ALSLVARGCA…SENDPKQQNE (122 aa). The segment at 3020-3242 is C-terminal effector domain (CT); it reads ALSLVARGCA…IESALKGYGI (223 aa). The tRNase function, does not interfere with F-pilus mediated conjugation stretch occupies residues 3098–3242; it reads GSGAASNPNI…IESALKGYGI (145 aa). The interval 3116–3146 is disordered; the sequence is KVELGGSGSGTGTPPPSENDPKQQNEKTVDK. A compositionally biased stretch (basic and acidic residues) spans 3134-3146; the sequence is NDPKQQNEKTVDK. The stretch at 3137–3238 forms a coiled coil; sequence KQQNEKTVDK…AINKIESALK (102 aa). Catalysis depends on residues Asp-3170, His-3193, and Glu-3196.

It in the N-terminal section; belongs to the CdiA toxin family. In terms of assembly, the C-terminal (CT) domain interacts with cognate CdiI but not non-cognate CdiI from D.dadantii strain 3937. CdiA-CT also interacts with CysK; this is blocked upon preincubation with O-acetyl-L-serine. CysK forms a complex with CdiA-CT/CdiI. One CdiA toxin subunit binds to each subunit of the CysK homodimer, and one CdiI immunity protein binds to each toxin subunit; the immune complex is thus a dimer of trimers. The 4 C-terminal residues of CdiA fit into the active site of CysK. A divalent metal cation is required as a cofactor.

The protein localises to the secreted. Its subcellular location is the target cell membrane. The protein resides in the target cell. It is found in the target cell cytoplasm. Functionally, toxic component of a toxin-immunity protein module, which functions as a cellular contact-dependent growth inhibition (CDI) system. CDI modules allow bacteria to communicate with and inhibit the growth of closely related neighboring bacteria in a contact-dependent fashion (target cell counts decrease 100- to 1000-fold). CdiA toxicity is neutralized by its cognate immunity protein CdiI, but not by CdiI from other bacteria. Uses heterotrimeric OmpC and OmpF as target cell outer membrane receptors; receptor function depends on polymorphisms in extracellular loops L4 and L5 of OmpC; interacts with itself and closely related bacteria but also with OmpC from E.cloacae ATCC 13047. Its ability to preferentially bind to 'self' receptors suggests it may also play a role in self-recognition and kin selection. A bamA mutation that decreases its expression about 5-fold is partially resistant to this strain of CdiA, probably due to decreased outer membrane receptor protein assembly. Isolated CdiA-CT is imported in an F-pilus-mediated fashion; CdiA-CT inhibits F-mediated conjugation, probably via its N-terminus (residues 3016-3097), although it is not clear if this is physiologically significant. Gains access to the cytoplasm of target cells by using integral inner membrane protein FtsH. The C-terminal domain (CT) cleaves within tRNA anticodon loops; this activity is inhibited by cognate CdiI. tRNase activity of CdiA-CT is stimulated by CysK, although the extreme C-terminus (residues 3098-3242) has tRNase activity in the absence of CysK. In vivo CDI toxicity requires CysK. CysK stabilizes CdiA-CT, allowing it to bind tRNA substrate; neither CdiA-CT nor CysK bind tRNA alone in vitro. Purified CdiA-CT (residues 3016-3242) inhibits E.coli cell growth when added to cultures alone or in complex with cognate CdiI, growth is inhibited when cognate CdiI is present within the cell but not when a CdiA-CT/CdiI complex is added extracellularly, suggesting CdiA-CT alone but not the CdiA-CT/CdiI complex is imported into the target cell. Its function is as follows. The CdiA protein is thought to be exported from the cell through the central lumen of CdiB, the other half of its two-partner system (TPS). The TPS domain probably remains associated with CdiB while the FHA-1 domain forms an extended filament with the receptor-binding domain (RBD) at its extremity; in the secretion arrested state the C-terminus of the RBD and YP domains form a hairpin-like structure as the FHA-2, PT and CT domains are periplasmic. The YP domain is probably responsible for this arrest at the point where it re-enters the host cell periplasm. Upon binding to a target cell outer membrane receptor (heterotrimeric OmpC-OmpF for this CDI) a signal is transmitted to activate secretion. The filament elongates slightly, the rest of CdiA is secreted and the FHA-2 domain becomes stably associated with the target cell's outer membrane where it facilitates entry of the toxic CT domain into the target cell periplasm. From there the toxic CT domain is cleaved and gains access to the target cell cytoplasm via an inner membrane protein (FtsH for this CDI). The protein is tRNA nuclease CdiA of Escherichia coli O6:K15:H31 (strain 536 / UPEC).